Consider the following 412-residue polypeptide: CinA-like protein (412 aa).

The protein belongs to the CinA family.

The protein is CinA-like protein of Kosmotoga olearia (strain ATCC BAA-1733 / DSM 21960 / TBF 19.5.1).